A 1045-amino-acid polypeptide reads, in one-letter code: MNLQAQPKAQNKRKRCLFGGQEPAPKEQPPPLQPPQQSIRVKEEQYLGHEGPGGAVSTSQPVELPPPSSLALLNSVVYGPERTSAAMLSQQVASVKWPNSVMAPGRGPERGGGGGVSDSSWQQQPGQPPPHSTWNCHSLSLYSATKGSPHPGVGVPTYYNHPEALKREKAGGPQLDRYVRPMMPQKVQLEVGRPQAPLNSFHAAKKPPNQSLPLQPFQLAFGHQVNRQVFRQGPPPPNPVAAFPPQKQQQQQQPQQQQQQQQAALPQMPLFENFYSMPQQPSQQPQDFGLQPAGPLGQSHLAHHSMAPYPFPPNPDMNPELRKALLQDSAPQPALPQVQIPFPRRSRRLSKEGILPPSALDGAGTQPGQEATGNLFLHHWPLQQPPPGSLGQPHPEALGFPLELRESQLLPDGERLAPNGREREAPAMGSEEGMRAVSTGDCGQVLRGGVIQSTRRRRRASQEANLLTLAQKAVELASLQNAKDGSGSEEKRKSVLASTTKCGVEFSEPSLATKRAREDSGMVPLIIPVSVPVRTVDPTEAAQAGGLDEDGKGPEQNPAEHKPSVIVTRRRSTRIPGTDAQAQAEDMNVKLEGEPSVRKPKQRPRPEPLIIPTKAGTFIAPPVYSNITPYQSHLRSPVRLADHPSERSFELPPYTPPPILSPVREGSGLYFNAIISTSTIPAPPPITPKSAHRTLLRTNSAEVTPPVLSVMGEATPVSIEPRINVGSRFQAEIPLMRDRALAAADPHKADLVWQPWEDLESSREKQRQVEDLLTAACSSIFPGAGTNQELALHCLHESRGDILETLNKLLLKKPLRPHNHPLATYHYTGSDQWKMAERKLFNKGIAIYKKDFFLVQKLIQTKTVAQCVEFYYTYKKQVKIGRNGTLTFGDVDTSDEKSAQEEVEVDIKTSQKFPRVPLPRRESPSEERLEPKREVKEPRKEGEEEVPEIQEKEEQEEGRERSRRAAAVKATQTLQANESASDILILRSHESNAPGSAGGQASEKPREGTGKSRRALPFSEKKKKTETFSKTQNQENTFPCKKCGR.

At methionine 1 the chain carries N-acetylmethionine. Disordered regions lie at residues 1 to 68 (MNLQ…PPPS) and 99 to 159 (NSVM…PTYY). The segment covering 132–146 (STWNCHSLSLYSATK) has biased composition (polar residues). Lysine 166 participates in a covalent cross-link: Glycyl lysine isopeptide (Lys-Gly) (interchain with G-Cter in SUMO2). At arginine 193 the chain carries Asymmetric dimethylarginine. 5 disordered regions span residues 228–264 (QVFR…QQAA), 276–305 (SMPQ…AHHS), 330–349 (APQP…SRRL), 378–397 (HHWP…HPEA), and 410–441 (LPDG…STGD). Low complexity predominate over residues 240-264 (VAAFPPQKQQQQQQPQQQQQQQQAA). The span at 412–425 (DGERLAPNGREREA) shows a compositional bias: basic and acidic residues. Arginine 447 carries the omega-N-methylarginine modification. Serine 461 bears the Phosphoserine mark. Residues 543–563 (QAGGLDEDGKGPEQNPAEHKP) form a disordered region. Residues 549–563 (EDGKGPEQNPAEHKP) show a composition bias toward basic and acidic residues. Residue lysine 590 forms a Glycyl lysine isopeptide (Lys-Gly) (interchain with G-Cter in SUMO1); alternate linkage. Lysine 590 participates in a covalent cross-link: Glycyl lysine isopeptide (Lys-Gly) (interchain with G-Cter in SUMO2); alternate. A Phosphothreonine modification is found at threonine 655. Serine 661 is modified (phosphoserine). Phosphothreonine is present on threonine 704. At serine 709 the chain carries Phosphoserine. Position 715 is a phosphothreonine (threonine 715). In terms of domain architecture, ELM2 spans 721-813 (PRINVGSRFQ…ETLNKLLLKK (93 aa)). In terms of domain architecture, SANT spans 828 to 879 (TGSDQWKMAERKLFNKGIAIYKKDFFLVQKLIQTKTVAQCVEFYYTYKKQVK). The tract at residues 887–1045 (TFGDVDTSDE…NTFPCKKCGR (159 aa)) is disordered. 2 stretches are compositionally biased toward basic and acidic residues: residues 894 to 909 (SDEK…DIKT) and 919 to 942 (PRRE…RKEG). The residue at position 923 (serine 923) is a Phosphoserine. Positions 943 to 957 (EEEVPEIQEKEEQEE) are enriched in acidic residues. A compositionally biased stretch (polar residues) spans 970–980 (ATQTLQANESA).

As to quaternary structure, interacts with DNTTIP1. Identified in a histone deacetylase complex that contains DNTTIP1, HDAC1 and MIDEAS; this complex assembles into a tetramer that contains four copies of each protein chain.

Its subcellular location is the nucleus. This chain is Mitotic deacetylase-associated SANT domain protein, found in Homo sapiens (Human).